Reading from the N-terminus, the 353-residue chain is Thiamine-phosphate synthase (353 aa).

A unknown region spans residues 1–128 (MKSMPVAPIA…AASAAAIRYG (128 aa)). The thiamine-phosphate synthase stretch occupies residues 129 to 353 (LYDLEVTVLQ…TSLQLLEALR (225 aa)). Residues 185–189 (QYRNK) and Asn217 contribute to the 4-amino-2-methyl-5-(diphosphooxymethyl)pyrimidine site. Mg(2+) is bound by residues Asp218 and Asp237. Ser256 lines the 4-amino-2-methyl-5-(diphosphooxymethyl)pyrimidine pocket. Position 282-284 (282-284 (TAT)) interacts with 2-[(2R,5Z)-2-carboxy-4-methylthiazol-5(2H)-ylidene]ethyl phosphate. Lys285 is a 4-amino-2-methyl-5-(diphosphooxymethyl)pyrimidine binding site. A 2-[(2R,5Z)-2-carboxy-4-methylthiazol-5(2H)-ylidene]ethyl phosphate-binding site is contributed by Gly312.

The protein belongs to the thiamine-phosphate synthase family. Mg(2+) serves as cofactor.

It catalyses the reaction 2-[(2R,5Z)-2-carboxy-4-methylthiazol-5(2H)-ylidene]ethyl phosphate + 4-amino-2-methyl-5-(diphosphooxymethyl)pyrimidine + 2 H(+) = thiamine phosphate + CO2 + diphosphate. It carries out the reaction 2-(2-carboxy-4-methylthiazol-5-yl)ethyl phosphate + 4-amino-2-methyl-5-(diphosphooxymethyl)pyrimidine + 2 H(+) = thiamine phosphate + CO2 + diphosphate. The catalysed reaction is 4-methyl-5-(2-phosphooxyethyl)-thiazole + 4-amino-2-methyl-5-(diphosphooxymethyl)pyrimidine + H(+) = thiamine phosphate + diphosphate. Its pathway is cofactor biosynthesis; thiamine diphosphate biosynthesis; thiamine phosphate from 4-amino-2-methyl-5-diphosphomethylpyrimidine and 4-methyl-5-(2-phosphoethyl)-thiazole: step 1/1. Its function is as follows. Condenses 4-methyl-5-(beta-hydroxyethyl)thiazole monophosphate (THZ-P) and 2-methyl-4-amino-5-hydroxymethyl pyrimidine pyrophosphate (HMP-PP) to form thiamine monophosphate (TMP). The chain is Thiamine-phosphate synthase from Prochlorococcus marinus (strain MIT 9303).